Reading from the N-terminus, the 497-residue chain is Probable cytosol aminopeptidase (497 aa).

Mn(2+) contacts are provided by lysine 262 and aspartate 267. Lysine 274 is a catalytic residue. Residues aspartate 285, aspartate 344, and glutamate 346 each contribute to the Mn(2+) site. Arginine 348 is an active-site residue.

The protein belongs to the peptidase M17 family. It depends on Mn(2+) as a cofactor.

Its subcellular location is the cytoplasm. It carries out the reaction Release of an N-terminal amino acid, Xaa-|-Yaa-, in which Xaa is preferably Leu, but may be other amino acids including Pro although not Arg or Lys, and Yaa may be Pro. Amino acid amides and methyl esters are also readily hydrolyzed, but rates on arylamides are exceedingly low.. It catalyses the reaction Release of an N-terminal amino acid, preferentially leucine, but not glutamic or aspartic acids.. Functionally, presumably involved in the processing and regular turnover of intracellular proteins. Catalyzes the removal of unsubstituted N-terminal amino acids from various peptides. This Rhizobium etli (strain ATCC 51251 / DSM 11541 / JCM 21823 / NBRC 15573 / CFN 42) protein is Probable cytosol aminopeptidase.